Here is a 299-residue protein sequence, read N- to C-terminus: Probable lipid kinase YegS (299 aa).

Residues 2-133 (ANFPASLLIL…IDMARVNDKT (132 aa)) form the DAGKc domain. Residues Thr40, 66-72 (GDGTINE), and Thr95 each bind ATP. Mg(2+)-binding residues include Leu215, Asp218, and Leu220. Glu271 acts as the Proton acceptor in catalysis.

This sequence belongs to the diacylglycerol/lipid kinase family. YegS lipid kinase subfamily. Mg(2+) serves as cofactor. It depends on Ca(2+) as a cofactor.

It localises to the cytoplasm. Functionally, probably phosphorylates lipids; the in vivo substrate is unknown. The polypeptide is Probable lipid kinase YegS (Salmonella heidelberg (strain SL476)).